Here is a 306-residue protein sequence, read N- to C-terminus: tRNA pseudouridine synthase B (306 aa).

Residue Asp47 is the Nucleophile of the active site.

Belongs to the pseudouridine synthase TruB family. Type 1 subfamily.

The catalysed reaction is uridine(55) in tRNA = pseudouridine(55) in tRNA. In terms of biological role, responsible for synthesis of pseudouridine from uracil-55 in the psi GC loop of transfer RNAs. The chain is tRNA pseudouridine synthase B from Neisseria gonorrhoeae (strain NCCP11945).